A 716-amino-acid polypeptide reads, in one-letter code: Tensin-4 (716 aa).

A signal peptide spans 1–17 (MSQVMSSPLLAGGPAVG). Disordered stretches follow at residues 119–274 (LPPG…VSML), 301–322 (QSSSRSLESPSSSSSSLNNLGP), 334–366 (VPSNATPSMGQPRATRSPPLAKEHASSCPPSIT), and 379–436 (GFPE…RDMQ). The span at 138 to 150 (KKKEEPEALDIKY) shows a compositional bias: basic and acidic residues. Over residues 197–206 (SSESLIFSGS) the composition is skewed to polar residues. Pro residues predominate over residues 214–228 (PAPPSAVPSSHPPTS). A Phosphoserine modification is found at S248. Polar residues predominate over residues 265–274 (PQLSSRVSML). Residues 402-419 (ATSSSMPCPATRSHSQTL) are compositionally biased toward polar residues. An SH2 domain is found at 449–556 (WFKPSISREQ…ALPCKLVIPQ (108 aa)). The PTB domain occupies 583–704 (CHALYLSSVS…TLQPASQVIR (122 aa)).

The protein belongs to the PTEN phosphatase protein family. Interacts (via SH2 domain) with Rho GTPase-activating protein DLC1 (via C-terminus); the interaction is independent of DLC1 tyrosine phosphorylation. Interacts with integrin ITGB1; the interaction displaces tensin TNS3 from the ITGB1 cytoplasmic tail and promotes ITGB1 stability. Interacts (via SH2 domain) with E3 ubiquitin-protein ligase CBL (phosphorylated on 'Tyr-782'); the interaction is enhanced in the presence of EGF and reduces interaction of CBL with EGFR. Interacts (via SH2 domain) with receptor tyrosine kinase MET (when phosphorylated); the interaction increases MET protein stability.

It localises to the cell junction. It is found in the focal adhesion. Its subcellular location is the cytoplasm. The protein resides in the cytoskeleton. Its function is as follows. Promotes EGF-induced cell migration by displacing tensin TNS3 from the cytoplasmic tail of integrin ITGB1 which results in dissociation of TNS3 from focal adhesions, disassembly of actin stress fibers and initiation of cell migration. Suppresses ligand-induced degradation of EGFR by reducing EGFR ubiquitination in the presence of EGF. Increases MET protein stability by inhibiting MET endocytosis and subsequent lysosomal degradation which leads to increased cell survival, proliferation and migration. The sequence is that of Tensin-4 (TNS4) from Bos taurus (Bovine).